Reading from the N-terminus, the 760-residue chain is Formin-like protein 8 (760 aa).

Residues 1–29 (MAAMFNHPWPNLTLIYFFFIVVLPFQSLS) form the signal peptide. Positions 52-63 (PLLPPSSNPSPP) are enriched in pro residues. Positions 52–71 (PLLPPSSNPSPPSNNSSSSD) are disordered. Residues 78–98 (AVLITAASTLLVAGVFFFCLQ) traverse the membrane as a helical segment. The segment at 204–313 (TEIPLLRGRS…VKLKPLHWDK (110 aa)) is disordered. A compositionally biased stretch (pro residues) spans 253 to 274 (TPSPPPPIKKGSSPSPPPPPPV). The FH2 domain maps to 296-732 (SGGETSKQVK…GSPISPSSQR (437 aa)).

This sequence belongs to the formin-like family. Class-I subfamily. In terms of assembly, interacts with profilin.

It is found in the cell membrane. Its function is as follows. Might be involved in the organization and polarity of the actin cytoskeleton. Interacts with the barbed end of actin filaments and nucleates actin-filament polymerization in vitro. The polypeptide is Formin-like protein 8 (FH8) (Arabidopsis thaliana (Mouse-ear cress)).